We begin with the raw amino-acid sequence, 41 residues long: MTGSYAASFLPWIMIPVTCWLFPVVVMGLLFIYIESDAPST.

A helical membrane pass occupies residues 12–32 (WIMIPVTCWLFPVVVMGLLFI).

This sequence belongs to the PsaI family.

It is found in the cellular thylakoid membrane. In terms of biological role, may help in the organization of the PsaL subunit. The protein is Photosystem I reaction center subunit VIII of Cyanothece sp. (strain PCC 7425 / ATCC 29141).